A 111-amino-acid chain; its full sequence is Elevenin (111 aa).

Positions 1 to 24 are cleaved as a signal peptide; it reads MAPSQKALLVLVLSMLLTASDSRA. Cysteine 29 and cysteine 38 are joined by a disulfide. A propeptide spanning residues 44–111 is cleaved from the precursor; sequence KRGGDSLSVG…TEQLDRLLTL (68 aa).

The protein belongs to the elevenin family. Monomer. In terms of tissue distribution, expressed by the venom duct.

The protein localises to the secreted. In terms of biological role, may mimic the function of prey elevenin neuropeptide. In vivo, intracranial injection in mice induces hyperactivity. This Conus ebraeus (Hebrew cone) protein is Elevenin.